Reading from the N-terminus, the 639-residue chain is Phosphatidylinositol 3,4,5-trisphosphate 3-phosphatase cnrN (639 aa).

In terms of domain architecture, Phosphatase tensin-type spans 20–190; that stretch reads FKSKEMDLDL…NYFKEIVSGS (171 aa). Cys-129 serves as the catalytic Phosphocysteine intermediate. The C2 tensin-type domain occupies 195–350; the sequence is EFVLTFRSIE…LQMECRFQNN (156 aa). Disordered stretches follow at residues 243-265, 395-429, 451-498, 519-567, and 598-628; these read INND…NNNN, NNIL…HSTP, SSSG…SCSS, NNNN…RKRK, and FTKK…DPSE. 4 stretches are compositionally biased toward low complexity: residues 244–265, 395–424, 458–486, and 519–554; these read NNDN…NNNN, NNIL…LPSS, NSSR…SRSS, and NNNN…SNSN. Polar residues predominate over residues 598 to 608; the sequence is FTKKINPNNNE. Positions 619–628 are enriched in basic and acidic residues; it reads LKKETNDPSE.

It depends on Mg(2+) as a cofactor.

The enzyme catalyses a 1,2-diacyl-sn-glycero-3-phospho-(1D-myo-inositol-3,4,5-trisphosphate) + H2O = a 1,2-diacyl-sn-glycero-3-phospho-(1D-myo-inositol-4,5-bisphosphate) + phosphate. Its function is as follows. Protein phosphatase that negatively regulates PI3K-dependent pathways. Regulates cAMP signal transduction to control territory size. During development, a lawn of Dictyostelium cells breaks up into territories where cells aggregate in dendritic streams to form groups of 20'000 cells. The chain is Phosphatidylinositol 3,4,5-trisphosphate 3-phosphatase cnrN (cnrN) from Dictyostelium discoideum (Social amoeba).